We begin with the raw amino-acid sequence, 20 residues long: Toxin CpTx-4a (20 aa).

Belongs to the spider toxin CSTX family. Expressed by the venom gland.

It is found in the secreted. In terms of biological role, spider venom toxin that exhibits cytolytic activity by forming an alpha-helix across the membrane. Lethal to insect larvae. The sequence is that of Toxin CpTx-4a from Cheiracanthium punctorium (Yellow sac spider).